The following is a 202-amino-acid chain: Secreted RxLR effector protein 11 (202 aa).

Residues 1–23 form the signal peptide; it reads MRLNFTKLFAGAVALAWTTESMA. The RxLR-dEER motif lies at 49-61; sequence RRLRTINGADEER.

This sequence belongs to the RxLR effector family.

The protein localises to the secreted. It is found in the host cytoplasm. It localises to the host nucleus. Effector that acts as a broad suppressor of cell death to interrupt plant immunity. Inhibits cell death induced by cell death-inducing proteins, including the PAMP elicitor INF1 from P.infestans. This is Secreted RxLR effector protein 11 from Plasmopara viticola (Downy mildew of grapevine).